The sequence spans 300 residues: UDP-N-acetylenolpyruvoylglucosamine reductase (300 aa).

The region spanning 22 to 190 is the FAD-binding PCMH-type domain; that stretch reads RVGGAAEWLA…LSARFRLQPG (169 aa). Arg169 is an active-site residue. The active-site Proton donor is the Ser220. The active site involves Glu290.

Belongs to the MurB family. FAD serves as cofactor.

It is found in the cytoplasm. It carries out the reaction UDP-N-acetyl-alpha-D-muramate + NADP(+) = UDP-N-acetyl-3-O-(1-carboxyvinyl)-alpha-D-glucosamine + NADPH + H(+). It functions in the pathway cell wall biogenesis; peptidoglycan biosynthesis. Functionally, cell wall formation. This is UDP-N-acetylenolpyruvoylglucosamine reductase from Synechococcus sp. (strain CC9605).